The sequence spans 918 residues: Dual serine/threonine and tyrosine protein kinase (918 aa).

Basic and acidic residues predominate over residues 1–19 (MQKDGTRSSRRMEEGDRRN). Positions 1–29 (MQKDGTRSSRRMEEGDRRNGSTGSSGSVS) are disordered. The Protein kinase domain occupies 643-897 (PRIGRELGRG…PLMGIVQPML (255 aa)). ATP-binding positions include 649–657 (LGRGQYGVV) and K672. D768 acts as the Proton acceptor in catalysis.

The protein belongs to the protein kinase superfamily. Ser/Thr protein kinase family.

The protein localises to the cytoplasm. Its subcellular location is the cell membrane. It localises to the apical cell membrane. The protein resides in the basolateral cell membrane. It is found in the cell junction. It carries out the reaction L-seryl-[protein] + ATP = O-phospho-L-seryl-[protein] + ADP + H(+). It catalyses the reaction L-threonyl-[protein] + ATP = O-phospho-L-threonyl-[protein] + ADP + H(+). The catalysed reaction is L-tyrosyl-[protein] + ATP = O-phospho-L-tyrosyl-[protein] + ADP + H(+). May act as a positive regulator of ERK phosphorylation downstream of fibroblast growth factor-receptor activation. May induce both caspase-dependent apoptosis and caspase-independent cell death. May play a role in the embryonic development. This Xenopus tropicalis (Western clawed frog) protein is Dual serine/threonine and tyrosine protein kinase (dstyk).